The sequence spans 664 residues: Macrolide export ATP-binding/permease protein MacB (664 aa).

In terms of domain architecture, ABC transporter spans 8–246; the sequence is LEVHNLVREF…ELNKDPDAAP (239 aa). An ATP-binding site is contributed by 44–51; the sequence is GQSGSGKS. Helical transmembrane passes span 287 to 307, 543 to 563, 587 to 607, and 629 to 649; these read FLTMLGIIIGIASVVTVVALG, IAVISLIVGGIGVMNIMLVSV, FLIEAILVCLIGGVLGVLLSL, and SIVAAFVCSTLIGVVFGFLPA.

The protein belongs to the ABC transporter superfamily. Macrolide exporter (TC 3.A.1.122) family. Homodimer. Part of the tripartite efflux system MacAB-TolC, which is composed of an inner membrane transporter, MacB, a periplasmic membrane fusion protein, MacA, and an outer membrane component, TolC. The complex forms a large protein conduit and can translocate molecules across both the inner and outer membranes. Interacts with MacA.

The protein localises to the cell inner membrane. In terms of biological role, part of the tripartite efflux system MacAB-TolC. MacB is a non-canonical ABC transporter that contains transmembrane domains (TMD), which form a pore in the inner membrane, and an ATP-binding domain (NBD), which is responsible for energy generation. Confers resistance against macrolides. The sequence is that of Macrolide export ATP-binding/permease protein MacB from Acinetobacter baylyi (strain ATCC 33305 / BD413 / ADP1).